Reading from the N-terminus, the 683-residue chain is Amphiphysin (683 aa).

Coiled coils occupy residues 10–83 (AKNV…SLHE) and 144–191 (DYDS…QEEL). Residues 24-240 (VLQKLGKADE…MTKLGDQHAD (217 aa)) form the BAR domain. Disordered regions lie at residues 244-311 (SIQG…KVTP), 421-443 (AETE…AAAP), and 455-599 (EPKE…ASLS). Phosphoserine is present on Ser252. At Thr260 the chain carries Phosphothreonine. Residues 261–274 (PSPPEEASPLPSPT) are compositionally biased toward pro residues. Ser262, Ser268, Ser272, and Ser276 each carry phosphoserine. Thr280 carries the post-translational modification Phosphothreonine. Composition is skewed to low complexity over residues 424–443 (EQAL…AAAP) and 468–477 (AGETVGTEGS). Ser496 is modified (phosphoserine). Positions 539 to 559 (SNHEGEEHQETTTGTETREAT) are enriched in basic and acidic residues. The span at 585–596 (AATPAPAGAVDA) shows a compositional bias: low complexity. Positions 610–683 (GFLYKVETLH…FPENFTRHLE (74 aa)) constitute an SH3 domain. Ser626 bears the Phosphoserine mark.

Heterodimer with BIN1. Binds SH3GLB1. Interacts with REPS1 and SGIP1. Binds AP2A2. Interacts with AP2B1. Interacts with DNM1 and SYNJ1.

It is found in the cytoplasmic vesicle. It localises to the secretory vesicle. The protein resides in the synaptic vesicle membrane. Its subcellular location is the cytoplasm. The protein localises to the cytoskeleton. May participate in mechanisms of regulated exocytosis in synapses and certain endocrine cell types. May control the properties of the membrane associated cytoskeleton. The protein is Amphiphysin (Amph) of Rattus norvegicus (Rat).